The sequence spans 295 residues: sn-glycerol-3-phosphate transport system permease protein UgpA (295 aa).

The Cytoplasmic segment spans residues 1-11; sequence MSSSRPVFRSR. A helical membrane pass occupies residues 12–32; the sequence is WLPYLLVAPQLVITVIFFIWP. Over 33–80 the chain is Periplasmic; the sequence is AGEALWYSLQSVDPFGFSSQFVGLENFVALFHDSYYLDAFWTTIKFSA. Positions 76–284 constitute an ABC transmembrane type-1 domain; that stretch reads IKFSALVTFS…FLVIILTVVQ (209 aa). The chain crosses the membrane as a helical span at residues 81 to 101; that stretch reads LVTFSGLLVSLFFAALVDYVV. The Cytoplasmic portion of the chain corresponds to 102–109; sequence RGSRFYQT. Residues 110–130 form a helical membrane-spanning segment; that stretch reads LMLLPYAVAPAVAAVLWIFLF. Topologically, residues 131-157 are periplasmic; sequence NPGRGLITHFLGEFGYDWNHAQNSGQA. A helical membrane pass occupies residues 158–178; that stretch reads MFLVVFASVWKQISYNFLFFF. Residues 179 to 207 lie on the Cytoplasmic side of the membrane; it reads AALQSIPRSLVEAAAIDGAGPIRRFFRLS. Residues 208-228 form a helical membrane-spanning segment; that stretch reads LPLIAPVSFFLLVVNLVYAFF. The Periplasmic segment spans residues 229–262; sequence DTFPVIDAATAGGPVQATTTLIYKIYCEGFTGLD. The helical transmembrane segment at 263-283 threads the bilayer; it reads LSASAAQSVVLMFLVIILTVV. Topologically, residues 284 to 295 are cytoplasmic; the sequence is QFRYVESKVRYQ.

It belongs to the binding-protein-dependent transport system permease family. UgpAE subfamily. The complex is composed of two ATP-binding proteins (UgpC), two transmembrane proteins (UgpA and UgpE) and a solute-binding protein (UgpB).

The protein resides in the cell inner membrane. In terms of biological role, part of the ABC transporter complex UgpBAEC involved in sn-glycerol-3-phosphate (G3P) import. Probably responsible for the translocation of the substrate across the membrane. This is sn-glycerol-3-phosphate transport system permease protein UgpA (ugpA) from Salmonella typhi.